The chain runs to 780 residues: Acyl-CoA dehydrogenase family member 11 (780 aa).

The residue at position 177 (Lys-177) is an N6-acetyllysine. The residue at position 324 (Tyr-324) is a Phosphotyrosine. Lys-391 carries the N6-succinyllysine modification. Residues 504–514 and 538–540 each bind FAD; these read FCMTEPDVASS and WSS. Ser-514 provides a ligand contact to substrate. 629–632 provides a ligand contact to substrate; sequence GPGR. FAD is bound by residues Arg-657, Gln-727, and 727–731; that span reads QVCGG. Gly-755 provides a ligand contact to substrate. 756 to 758 contributes to the FAD binding site; it reads PDE.

This sequence belongs to the acyl-CoA dehydrogenase family. As to quaternary structure, homodimer. The cofactor is FAD. As to expression, widely expressed with highest levels in brain followed by liver, heart and kidney.

Its subcellular location is the peroxisome. It is found in the mitochondrion membrane. It catalyses the reaction a 2,3-saturated acyl-CoA + oxidized [electron-transfer flavoprotein] + H(+) = a (2E)-enoyl-CoA + reduced [electron-transfer flavoprotein]. It carries out the reaction docosanoyl-CoA + oxidized [electron-transfer flavoprotein] + H(+) = (2E)-docosenoyl-CoA + reduced [electron-transfer flavoprotein]. The enzyme catalyses tetracosanoyl-CoA + oxidized [electron-transfer flavoprotein] + H(+) = (2E)-tetracosenoyl-CoA + reduced [electron-transfer flavoprotein]. The catalysed reaction is eicosanoyl-CoA + oxidized [electron-transfer flavoprotein] + H(+) = (2E)-eicosenoyl-CoA + reduced [electron-transfer flavoprotein]. It catalyses the reaction hexacosanoyl-CoA + oxidized [electron-transfer flavoprotein] + H(+) = (2E)-hexacosenoyl-CoA + reduced [electron-transfer flavoprotein]. It carries out the reaction tricosanoyl-CoA + oxidized [electron-transfer flavoprotein] + H(+) = (2E)-tricosenoyl-CoA + reduced [electron-transfer flavoprotein]. Its pathway is lipid metabolism; fatty acid beta-oxidation. In terms of biological role, acyl-CoA dehydrogenase, that exhibits maximal activity towards saturated C22-CoA. Probably participates in beta-oxydation and energy production but could also play a role in the metabolism of specific fatty acids to control fatty acids composition of cellular lipids in brain. This chain is Acyl-CoA dehydrogenase family member 11 (ACAD11), found in Homo sapiens (Human).